The chain runs to 418 residues: UDP-N-acetyl-D-mannosamine dehydrogenase (418 aa).

NAD(+)-binding residues include tyrosine 10, isoleucine 11, aspartate 30, threonine 85, and threonine 119. Arginine 152, valine 153, lysine 204, asparagine 208, arginine 211, histidine 242, arginine 244, threonine 249, and glycine 255 together coordinate UDP-N-acetyl-alpha-D-mannosaminouronate. The Proton donor/acceptor role is filled by lysine 204. Cysteine 258 (nucleophile) is an active-site residue. Lysine 261 is an NAD(+) binding site. Positions 318 and 319 each coordinate UDP-N-acetyl-alpha-D-mannosaminouronate. An NAD(+)-binding site is contributed by arginine 326. Residue arginine 398 participates in UDP-N-acetyl-alpha-D-mannosaminouronate binding.

This sequence belongs to the UDP-glucose/GDP-mannose dehydrogenase family. In terms of assembly, homodimer.

It catalyses the reaction UDP-N-acetyl-alpha-D-mannosamine + 2 NAD(+) + H2O = UDP-N-acetyl-alpha-D-mannosaminouronate + 2 NADH + 3 H(+). Its function is as follows. Catalyzes the four-electron oxidation of UDP-N-acetyl-D-mannosamine (UDP-ManNAc), reducing NAD(+) and releasing UDP-N-acetylmannosaminuronic acid (UDP-ManNAcA). This is UDP-N-acetyl-D-mannosamine dehydrogenase from Pyrococcus horikoshii (strain ATCC 700860 / DSM 12428 / JCM 9974 / NBRC 100139 / OT-3).